Reading from the N-terminus, the 314-residue chain is Olfactory receptor 4Q2 (314 aa).

The Extracellular portion of the chain corresponds to 1-26 (MDKNQTEVMREFFLSGFSQTPSIEAG). Residue N4 is glycosylated (N-linked (GlcNAc...) asparagine). Residues 27 to 47 (LFVLFLFFYMSIWVGNVLIMV) form a helical membrane-spanning segment. The Cytoplasmic segment spans residues 48–61 (TVASDKYLNSSPMY). The chain crosses the membrane as a helical span at residues 62–84 (FLLGNLSFLDLCYSTVTTPKLLA). The Extracellular portion of the chain corresponds to 85–98 (DFFNHEKLISYDQC). C98 and C181 are joined by a disulfide. The chain crosses the membrane as a helical span at residues 99-119 (IVQLFFLHFVGAAEMFLLTVM). Residues 120–142 (AYDRYVAICRPLHYTTVMSRGLC) are Cytoplasmic-facing. Residues 143 to 163 (CVLVAASWMGGFVHSTVQTIL) traverse the membrane as a helical segment. Over 164–196 (TVHLPFCGPNQVENTFFCDVPPVIKLACADTFV) the chain is Extracellular. A helical transmembrane segment spans residues 197–217 (IELLMVSNSGLISTISFVVLI). Over 218-236 (SSYTTILVKIRSKEGRRKA) the chain is Cytoplasmic. The chain crosses the membrane as a helical span at residues 237–257 (LSTCASHLMVVTLFFGPCIFI). The Extracellular portion of the chain corresponds to 258-268 (YARPFSTFSVD). The helical transmembrane segment at 269–289 (KMVSVLYNVITPMLNPLIYTL) threads the bilayer. Topologically, residues 290-314 (RNKEVKSAMQKLWVRNGLTWKKQET) are cytoplasmic.

Belongs to the G-protein coupled receptor 1 family.

It localises to the cell membrane. Functionally, odorant receptor. This chain is Olfactory receptor 4Q2 (OR4Q2), found in Homo sapiens (Human).